The chain runs to 215 residues: Small ribosomal subunit protein uS3 (215 aa).

A KH type-2 domain is found at 39-107 (VRQYLQKKLA…PVHINIEEIR (69 aa)).

This sequence belongs to the universal ribosomal protein uS3 family. As to quaternary structure, part of the 30S ribosomal subunit. Forms a tight complex with proteins S10 and S14.

Functionally, binds the lower part of the 30S subunit head. Binds mRNA in the 70S ribosome, positioning it for translation. In Nitrosomonas europaea (strain ATCC 19718 / CIP 103999 / KCTC 2705 / NBRC 14298), this protein is Small ribosomal subunit protein uS3.